A 175-amino-acid polypeptide reads, in one-letter code: RNA pyrophosphohydrolase (175 aa).

Residues 6–149 (GYRPNVGIIL…KRQVYQQALT (144 aa)) enclose the Nudix hydrolase domain. The Nudix box signature appears at 38–59 (GGIKHGESPEQAMYRELYEEVG).

It belongs to the Nudix hydrolase family. RppH subfamily. Requires a divalent metal cation as cofactor.

Functionally, accelerates the degradation of transcripts by removing pyrophosphate from the 5'-end of triphosphorylated RNA, leading to a more labile monophosphorylated state that can stimulate subsequent ribonuclease cleavage. The sequence is that of RNA pyrophosphohydrolase from Azoarcus sp. (strain BH72).